The following is a 593-amino-acid chain: Inactive metallocarboxypeptidase ECM14 (593 aa).

The N-terminal stretch at Met-1–Ala-22 is a signal peptide. Residues Ile-23–Thr-184 constitute a propeptide that is removed on maturation. The tract at residues Ser-180 to Pro-210 is disordered. A compositionally biased stretch (polar residues) spans Pro-182–Pro-210. The region spanning Asp-220 to Leu-546 is the Peptidase M14 domain. Zn(2+) contacts are provided by His-285 and Glu-288. Substrate contacts are provided by residues His-285–Glu-288, Arg-343, and Asp-360–His-361. The cysteines at positions 354 and 377 are disulfide-linked. Asn-370 carries an N-linked (GlcNAc...) asparagine glycan. His-417 lines the Zn(2+) pocket. Residue Ser-418–Tyr-419 participates in substrate binding. The segment at Asn-557 to Ser-593 is disordered. The segment covering Gln-566 to Ser-581 has biased composition (acidic residues).

This sequence belongs to the peptidase M14 family. Requires Zn(2+) as cofactor.

It localises to the vacuole. The protein localises to the secreted. In terms of biological role, inactive carboxypeptidase that may play a role in cell wall organization and biogenesis. The sequence is that of Inactive metallocarboxypeptidase ECM14 (ECM14) from Arthroderma gypseum (strain ATCC MYA-4604 / CBS 118893) (Microsporum gypseum).